Consider the following 367-residue polypeptide: Queuine tRNA-ribosyltransferase (367 aa).

The Proton acceptor role is filled by Asp-92. Substrate contacts are provided by residues 92–96 (DSGGF), Asp-146, Gln-188, and Gly-215. Residues 246–252 (GVGTPKD) are RNA binding. The active-site Nucleophile is the Asp-265. Zn(2+) is bound by residues Cys-303, Cys-305, Cys-308, and His-334.

It belongs to the queuine tRNA-ribosyltransferase family. As to quaternary structure, homodimer. Within each dimer, one monomer is responsible for RNA recognition and catalysis, while the other monomer binds to the replacement base PreQ1. The cofactor is Zn(2+).

The catalysed reaction is 7-aminomethyl-7-carbaguanine + guanosine(34) in tRNA = 7-aminomethyl-7-carbaguanosine(34) in tRNA + guanine. It participates in tRNA modification; tRNA-queuosine biosynthesis. Its function is as follows. Catalyzes the base-exchange of a guanine (G) residue with the queuine precursor 7-aminomethyl-7-deazaguanine (PreQ1) at position 34 (anticodon wobble position) in tRNAs with GU(N) anticodons (tRNA-Asp, -Asn, -His and -Tyr). Catalysis occurs through a double-displacement mechanism. The nucleophile active site attacks the C1' of nucleotide 34 to detach the guanine base from the RNA, forming a covalent enzyme-RNA intermediate. The proton acceptor active site deprotonates the incoming PreQ1, allowing a nucleophilic attack on the C1' of the ribose to form the product. After dissociation, two additional enzymatic reactions on the tRNA convert PreQ1 to queuine (Q), resulting in the hypermodified nucleoside queuosine (7-(((4,5-cis-dihydroxy-2-cyclopenten-1-yl)amino)methyl)-7-deazaguanosine). The chain is Queuine tRNA-ribosyltransferase from Francisella tularensis subsp. novicida (strain U112).